The primary structure comprises 122 residues: Large ribosomal subunit protein uL14 (122 aa).

Belongs to the universal ribosomal protein uL14 family. In terms of assembly, part of the 50S ribosomal subunit. Forms a cluster with proteins L3 and L19. In the 70S ribosome, L14 and L19 interact and together make contacts with the 16S rRNA in bridges B5 and B8.

Functionally, binds to 23S rRNA. Forms part of two intersubunit bridges in the 70S ribosome. The sequence is that of Large ribosomal subunit protein uL14 from Hahella chejuensis (strain KCTC 2396).